The primary structure comprises 250 residues: MTFTVIIPARFASSRLPGKPLADINGKPMVVHVMERAQESGAQRVIVATDHPDVEVAVRQAGGEVCLTRADHNSGTERLAEVIERYGFTDDDIIVNVQGDEPLIPSVIIRQVAENLAASKAGMATLAVPIETSEEAFNPNAVKVVTDAEGYALYFSRATIPWDRERFAQSKETIGDHFLRHIGIYAYRAGFVRRYVTWAPSQLEQIELLEQLRVLWYGEKIHVAVAKAVPSVGVDTPEDLARVRQVMAGQ.

It belongs to the KdsB family.

The protein localises to the cytoplasm. It carries out the reaction 3-deoxy-alpha-D-manno-oct-2-ulosonate + CTP = CMP-3-deoxy-beta-D-manno-octulosonate + diphosphate. Its pathway is nucleotide-sugar biosynthesis; CMP-3-deoxy-D-manno-octulosonate biosynthesis; CMP-3-deoxy-D-manno-octulosonate from 3-deoxy-D-manno-octulosonate and CTP: step 1/1. The protein operates within bacterial outer membrane biogenesis; lipopolysaccharide biosynthesis. Activates KDO (a required 8-carbon sugar) for incorporation into bacterial lipopolysaccharide in Gram-negative bacteria. This chain is 3-deoxy-manno-octulosonate cytidylyltransferase, found in Pectobacterium atrosepticum (strain SCRI 1043 / ATCC BAA-672) (Erwinia carotovora subsp. atroseptica).